We begin with the raw amino-acid sequence, 137 residues long: 1,4-dihydroxy-2-naphthoyl-CoA hydrolase (137 aa).

Asp-12 is an active-site residue.

This sequence belongs to the 4-hydroxybenzoyl-CoA thioesterase family. DHNA-CoA hydrolase subfamily.

The enzyme catalyses 1,4-dihydroxy-2-naphthoyl-CoA + H2O = 1,4-dihydroxy-2-naphthoate + CoA + H(+). It participates in cofactor biosynthesis; phylloquinone biosynthesis. Its pathway is quinol/quinone metabolism; 1,4-dihydroxy-2-naphthoate biosynthesis; 1,4-dihydroxy-2-naphthoate from chorismate: step 7/7. In terms of biological role, catalyzes the hydrolysis of 1,4-dihydroxy-2-naphthoyl-CoA (DHNA-CoA) to 1,4-dihydroxy-2-naphthoate (DHNA), a reaction involved in phylloquinone (vitamin K1) biosynthesis. In Acaryochloris marina (strain MBIC 11017), this protein is 1,4-dihydroxy-2-naphthoyl-CoA hydrolase.